Consider the following 507-residue polypeptide: Histidine ammonia-lyase (507 aa).

A cross-link (5-imidazolinone (Ala-Gly)) is located at residues 141–143; that stretch reads ASG. Ser142 bears the 2,3-didehydroalanine (Ser) mark.

This sequence belongs to the PAL/histidase family. Contains an active site 4-methylidene-imidazol-5-one (MIO), which is formed autocatalytically by cyclization and dehydration of residues Ala-Ser-Gly.

It is found in the cytoplasm. The catalysed reaction is L-histidine = trans-urocanate + NH4(+). The protein operates within amino-acid degradation; L-histidine degradation into L-glutamate; N-formimidoyl-L-glutamate from L-histidine: step 1/3. This chain is Histidine ammonia-lyase, found in Burkholderia ambifaria (strain ATCC BAA-244 / DSM 16087 / CCUG 44356 / LMG 19182 / AMMD) (Burkholderia cepacia (strain AMMD)).